Consider the following 291-residue polypeptide: Transmembrane protein 41B (291 aa).

The disordered stretch occupies residues 1 to 39; sequence MAKGRVAERSQLGAHHTTPVGDGAAGTRGLAAPGSRDHQ. Phosphothreonine is present on T18. Position 35 is a phosphoserine (S35). Helical transmembrane passes span 52–72, 109–129, 147–169, 197–217, 225–245, and 262–282; these read MSLLILVSIFLSAAFVMFLVY, FYVQVLVAYFATYIFLQTFAI, LALFLVCLCSGLGASFCYMLSYL, LINYIIFLRITPFLPNWFINI, PLKVFFIGTFLGVAPPSFVAI, and SWNSIFILMILAVLSILPAIF. A VTT domain; required for its function in autophagy region spans residues 140-251; it reads GFLYPFPLAL…FVAIKAGTTL (112 aa).

It belongs to the TMEM41 family. In terms of assembly, interacts with VMP1. Interacts with COPA, COPB1, VDAC1 and ERLIN2. Interacts with ATG2A. Interacts with SURF4. As to quaternary structure, (Microbial infection) Interacts with Zika virus NS4A protein and Yellow fever virus NS4B protein.

It is found in the endoplasmic reticulum membrane. It localises to the endomembrane system. The protein localises to the cytoplasm. The catalysed reaction is a 1,2-diacyl-sn-glycero-3-phospho-L-serine(in) = a 1,2-diacyl-sn-glycero-3-phospho-L-serine(out). It catalyses the reaction cholesterol(in) = cholesterol(out). It carries out the reaction a 1,2-diacyl-sn-glycero-3-phosphocholine(in) = a 1,2-diacyl-sn-glycero-3-phosphocholine(out). The enzyme catalyses a 1,2-diacyl-sn-glycero-3-phosphoethanolamine(in) = a 1,2-diacyl-sn-glycero-3-phosphoethanolamine(out). Phospholipid scramblase involved in lipid homeostasis and membrane dynamics processes. Has phospholipid scramblase activity toward cholesterol and phosphatidylserine, as well as phosphatidylethanolamine and phosphatidylcholine. Required for autophagosome formation: participates in early stages of autophagosome biogenesis at the endoplasmic reticulum (ER) membrane by reequilibrating the leaflets of the ER as lipids are extracted by ATG2 (ATG2A or ATG2B) to mediate autophagosome assembly. In addition to autophagy, involved in other processes in which phospholipid scramblase activity is required. Required for normal motor neuron development. In terms of biological role, (Microbial infection) Critical host factor required for infection by human coronaviruses SARS-CoV-2, HCoV-OC43, HCoV-NL63, and HCoV-229E, as well as all flaviviruses tested such as Zika virus and Yellow fever virus. Required post-entry of the virus to facilitate the ER membrane remodeling necessary to form replication organelles. In Homo sapiens (Human), this protein is Transmembrane protein 41B.